The sequence spans 378 residues: Pyrimidine monooxygenase RutA (378 aa).

Residues 65–66 (IK), Asn-131, Glu-140, 156–157 (RY), and Ser-206 contribute to the FMN site.

It belongs to the NtaA/SnaA/DszA monooxygenase family. RutA subfamily.

It carries out the reaction uracil + FMNH2 + NADH + O2 = (Z)-3-ureidoacrylate + FMN + NAD(+) + H2O + H(+). The catalysed reaction is thymine + FMNH2 + NADH + O2 = (Z)-2-methylureidoacrylate + FMN + NAD(+) + H2O + H(+). In terms of biological role, catalyzes the pyrimidine ring opening between N-3 and C-4 by an unusual flavin hydroperoxide-catalyzed mechanism, adding oxygen atoms in the process to yield ureidoacrylate peracid, that immediately reacts with FMN forming ureidoacrylate and FMN-N(5)-oxide. The FMN-N(5)-oxide reacts spontaneously with NADH to produce FMN. Requires the flavin reductase RutF to regenerate FMN in vivo. The sequence is that of Pyrimidine monooxygenase RutA from Cronobacter turicensis (strain DSM 18703 / CCUG 55852 / LMG 23827 / z3032).